Here is a 195-residue protein sequence, read N- to C-terminus: MTDSVIYSMLELPTATQAQNDYGPQQKSSSSRPSCSCLVAIALGLLTAVLLSVLLYQWILCQGSNYSTCASCPSCPDRWMKYGNHCYYFSVEEKDWNSSLEFCLARDSHLLVITDNQEMSLLQVFLSEAFCWIGLRNNSGWRWEDGSPLNFSRISSNSFVQTCGAINKNGLQASSCEVPLHWVCKKCPFADQALF.

Residues 1–38 (MTDSVIYSMLELPTATQAQNDYGPQQKSSSSRPSCSCL) lie on the Cytoplasmic side of the membrane. The short motif at 5-10 (VIYSML) is the ITIM motif element. A helical; Signal-anchor for type II membrane protein transmembrane segment spans residues 39–59 (VAIALGLLTAVLLSVLLYQWI). Topologically, residues 60-195 (LCQGSNYSTC…KCPFADQALF (136 aa)) are extracellular. A glycan (N-linked (GlcNAc...) asparagine) is linked at asparagine 65. Cysteine 75 and cysteine 86 are joined by a disulfide. The region spanning 82-185 (YGNHCYYFSV…CEVPLHWVCK (104 aa)) is the C-type lectin domain. 3 N-linked (GlcNAc...) asparagine glycosylation sites follow: asparagine 97, asparagine 137, and asparagine 150. Intrachain disulfides connect cysteine 103–cysteine 184 and cysteine 163–cysteine 176.

As to quaternary structure, forms a monomer and homodimer; disulfide-linked. Interacts (via ITIM motif) with PTPN11 and INPP5D. Expressed specifically on natural killer (NK) cells and T-cells, mainly CD8 T-cells.

The protein localises to the cell membrane. Its function is as follows. Plays an inhibitory role on natural killer (NK) cells and T-cell functions upon binding to their non-MHC ligands. May mediate missing self recognition by binding to a highly conserved site on classical cadherins, enabling it to monitor expression of E-cadherin/CDH1, N-cadherin/CDH2 and R-cadherin/CDH4 on target cells. This chain is Killer cell lectin-like receptor subfamily G member 1 (KLRG1), found in Homo sapiens (Human).